A 205-amino-acid chain; its full sequence is Probable NAD(P)H dehydrogenase (quinone) FQR1-like 1 (205 aa).

The region spanning 5–192 (VYIVYYSMYG…GQAFHQGKYI (188 aa)) is the Flavodoxin-like domain. Residues 11-15 (SMYGH), 112-165 (IFYS…SPYG), and H136 each bind FMN. Y13 is a binding site for NAD(+).

Belongs to the WrbA family. FMN is required as a cofactor.

The protein localises to the cell membrane. It carries out the reaction a quinone + NADH + H(+) = a quinol + NAD(+). The catalysed reaction is a quinone + NADPH + H(+) = a quinol + NADP(+). Functionally, catalyzes the transfer of electrons from NADH and NADPH to reduce quinone to the hydroquinone state. This chain is Probable NAD(P)H dehydrogenase (quinone) FQR1-like 1, found in Arabidopsis thaliana (Mouse-ear cress).